A 244-amino-acid polypeptide reads, in one-letter code: Carboxy-S-adenosyl-L-methionine synthase (244 aa).

Residues Tyr-38, 63–65 (GCS), 88–89 (DN), 116–117 (DI), Asn-131, and Arg-198 contribute to the S-adenosyl-L-methionine site.

It belongs to the class I-like SAM-binding methyltransferase superfamily. Cx-SAM synthase family. Homodimer.

The catalysed reaction is prephenate + S-adenosyl-L-methionine = carboxy-S-adenosyl-L-methionine + 3-phenylpyruvate + H2O. Functionally, catalyzes the conversion of S-adenosyl-L-methionine (SAM) to carboxy-S-adenosyl-L-methionine (Cx-SAM). In Haemophilus ducreyi (strain 35000HP / ATCC 700724), this protein is Carboxy-S-adenosyl-L-methionine synthase.